The primary structure comprises 326 residues: Large ribosomal subunit protein uL4 (326 aa).

Residues 1–211 form a large ribosomal subunit protein uL4 region; it reads MASCVVKNWQ…EKLKARWGSG (211 aa). 2 disordered regions span residues 44-76 and 211-326; these read ARQG…ARAG and GAAA…EDND. Residues 60–71 show a composition bias toward basic residues; sequence GGRKPWRQKGTG. The segment at 212 to 326 is unknown; sequence AAAAAPTQAD…TAAAEEEDND (115 aa). Positions 221–238 are enriched in basic and acidic residues; sequence DRLEDQAQAAEREARPVE. Composition is skewed to low complexity over residues 252–279 and 294–312; these read EAQA…QVQE and QGQA…PPAG. Acidic residues predominate over residues 313-326; it reads EEAETAAAEEEDND.

The protein belongs to the universal ribosomal protein uL4 family. In terms of assembly, part of the 50S ribosomal subunit.

Functionally, one of the primary rRNA binding proteins, this protein initially binds near the 5'-end of the 23S rRNA. It is important during the early stages of 50S assembly. It makes multiple contacts with different domains of the 23S rRNA in the assembled 50S subunit and ribosome. Its function is as follows. Forms part of the polypeptide exit tunnel. The chain is Large ribosomal subunit protein uL4 from Synechococcus sp. (strain JA-3-3Ab) (Cyanobacteria bacterium Yellowstone A-Prime).